We begin with the raw amino-acid sequence, 368 residues long: Polymerase delta-interacting protein 2 (368 aa).

Residues 1–21 (MAGCVARRALAVGSRWWSRSL) constitute a mitochondrion transit peptide. Positions 235–360 (RETTENIRVT…FSLESNKDEK (126 aa)) constitute an ApaG domain. A Phosphothreonine modification is found at Thr-292.

In terms of assembly, interacts with PCNA and POLD2. Interacts with SSBP1. Interacts with PRIMPOL; leading to enhance DNA polymerase activity of PRIMPOL. Interacts with POLH. Interacts with POLD1; leading to stimulate DNA polymerase activity of POLD1.

The protein localises to the mitochondrion matrix. The protein resides in the nucleus. Functionally, involved in DNA damage tolerance by regulating translesion synthesis (TLS) of templates carrying DNA damage lesions such as 8oxoG and abasic sites. May act by stimulating activity of DNA polymerases involved in TLS, such as PRIMPOL and polymerase delta (POLD1). The sequence is that of Polymerase delta-interacting protein 2 from Mus musculus (Mouse).